We begin with the raw amino-acid sequence, 917 residues long: Nitrate reductase [NADH] 1 (917 aa).

The tract at residues 62–81 is disordered; that stretch reads DSYDDSSSDDEDESHNRNVP. A compositionally biased stretch (acidic residues) spans 63 to 74; the sequence is SYDDSSSDDEDE. Residue Cys-197 coordinates Mo-molybdopterin. Positions 545 to 620 constitute a Cytochrome b5 heme-binding domain; the sequence is SKMYSISEVR…LEDYRIGELI (76 aa). Heme is bound by residues His-580 and His-603. The 113-residue stretch at 660–772 folds into the FAD-binding FR-type domain; the sequence is REKIPVRLIE…KGPLGHIEYK (113 aa). FAD contacts are provided by residues 712–715, 729–733, Phe-734, Phe-741, 746–748, and Thr-799; these read RAYT, VVKVY, and LMS.

This sequence belongs to the nitrate reductase family. As to quaternary structure, homodimer. The cofactor is FAD. Heme serves as cofactor. Requires Mo-molybdopterin as cofactor. Root, leaf, and shoot.

It catalyses the reaction nitrite + NAD(+) + H2O = nitrate + NADH + H(+). Functionally, nitrate reductase is a key enzyme involved in the first step of nitrate assimilation in plants, fungi and bacteria. The polypeptide is Nitrate reductase [NADH] 1 (NIA1) (Arabidopsis thaliana (Mouse-ear cress)).